The chain runs to 361 residues: Alternative oxidase, mitochondrial (361 aa).

The helical transmembrane segment at tyrosine 156–arginine 178 threads the bilayer. The Fe cation site is built by glutamate 164, glutamate 203, and histidine 206. A helical transmembrane segment spans residues tryptophan 218 to leucine 240. Positions 254, 309, and 312 each coordinate Fe cation. The span at threonine 318–proline 328 shows a compositional bias: polar residues. The tract at residues threonine 318–methionine 361 is disordered. Basic and acidic residues predominate over residues proline 343–methionine 361.

The protein belongs to the alternative oxidase family. The cofactor is Fe cation.

It localises to the mitochondrion inner membrane. Its function is as follows. Catalyzes cyanide-resistant oxygen consumption. May increase respiration when the cytochrome respiratory pathway is restricted, or in response to low temperatures. In Venturia inaequalis (Apple scab fungus), this protein is Alternative oxidase, mitochondrial (AOX1).